The primary structure comprises 465 residues: ATP synthase subunit beta (465 aa).

152–159 (GGAGVGKT) provides a ligand contact to ATP.

This sequence belongs to the ATPase alpha/beta chains family. F-type ATPases have 2 components, CF(1) - the catalytic core - and CF(0) - the membrane proton channel. CF(1) has five subunits: alpha(3), beta(3), gamma(1), delta(1), epsilon(1). CF(0) has three main subunits: a(1), b(2) and c(9-12). The alpha and beta chains form an alternating ring which encloses part of the gamma chain. CF(1) is attached to CF(0) by a central stalk formed by the gamma and epsilon chains, while a peripheral stalk is formed by the delta and b chains.

Its subcellular location is the cell membrane. It carries out the reaction ATP + H2O + 4 H(+)(in) = ADP + phosphate + 5 H(+)(out). Functionally, produces ATP from ADP in the presence of a proton gradient across the membrane. The catalytic sites are hosted primarily by the beta subunits. The chain is ATP synthase subunit beta from Desulfitobacterium hafniense (strain Y51).